Here is a 174-residue protein sequence, read N- to C-terminus: Co-chaperone protein HscB homolog (174 aa).

One can recognise a J domain in the interval 2–74 (NYFELFKFPP…IRRAEHMLSL (73 aa)).

Belongs to the HscB family. Interacts with HscA and stimulates its ATPase activity.

Its function is as follows. Co-chaperone involved in the maturation of iron-sulfur cluster-containing proteins. Seems to help targeting proteins to be folded toward HscA. The chain is Co-chaperone protein HscB homolog from Shewanella oneidensis (strain ATCC 700550 / JCM 31522 / CIP 106686 / LMG 19005 / NCIMB 14063 / MR-1).